We begin with the raw amino-acid sequence, 453 residues long: Putative F-box/FBD/LRR-repeat protein At1g66290 (453 aa).

The disordered stretch occupies residues 1–28 (MDEDGERRVRTKRSCSPESSDNGSGDEV). Residues 14–23 (SCSPESSDNG) are compositionally biased toward polar residues. An F-box domain is found at 28–81 (VDWISDLPEALIVLVLLNLPTKDVIKTSVLSTKWRNIWRYVPRLDLDNRHFTEF). LRR repeat units follow at residues 155-179 (SLKL…VLVL), 210-235 (LDNV…SSKS), 246-269 (APKL…NLSS), 305-329 (LSRV…RCEP), and 358-381 (CSNL…IISE). In terms of domain architecture, FBD spans 373–423 (RKRTSIISEPRCLLSSLEYVKIEFALDKGKMELVRYLLENSPILKKLTLSL).

The polypeptide is Putative F-box/FBD/LRR-repeat protein At1g66290 (Arabidopsis thaliana (Mouse-ear cress)).